A 473-amino-acid polypeptide reads, in one-letter code: RuvB-like helicase 2 (473 aa).

76 to 83 contributes to the ATP binding site; the sequence is GPPSTGKT.

This sequence belongs to the RuvB family. As to quaternary structure, may form heterododecamers with RVB1. Component of the SWR1 chromatin remodeling complex, the INO80 chromatin remodeling complex, and of the R2TP complex.

The protein localises to the nucleus. It carries out the reaction ATP + H2O = ADP + phosphate + H(+). Functionally, DNA helicase which participates in several chromatin remodeling complexes, including the SWR1 and the INO80 complexes. The SWR1 complex mediates the ATP-dependent exchange of histone H2A for the H2A variant HZT1 leading to transcriptional regulation of selected genes by chromatin remodeling. The INO80 complex remodels chromatin by shifting nucleosomes and is involved in DNA repair. Also involved in pre-rRNA processing. The polypeptide is RuvB-like helicase 2 (RVB2) (Gibberella zeae (strain ATCC MYA-4620 / CBS 123657 / FGSC 9075 / NRRL 31084 / PH-1) (Wheat head blight fungus)).